The chain runs to 508 residues: E3 ubiquitin-protein ligase XBAT32 (508 aa).

ANK repeat units lie at residues 50–79 (VRNS…DINL), 83–112 (RGQT…NIHR), 117–147 (NGGT…SVPN), 177–206 (GGIT…SVTQ), and 220–249 (AGST…CLAA). The RING-type zinc-finger motif lies at 321-372 (CAVCLERKCTVAADGCAHEFCTNCALYLSTTSITSSKTSNVTPGSVPCPLCR).

Interacts with ACS4 and ACS7. Expressed in the vascular system of primary root, vascular tissue of leaves, stems and anthers.

It carries out the reaction S-ubiquitinyl-[E2 ubiquitin-conjugating enzyme]-L-cysteine + [acceptor protein]-L-lysine = [E2 ubiquitin-conjugating enzyme]-L-cysteine + N(6)-ubiquitinyl-[acceptor protein]-L-lysine.. Its pathway is protein modification; protein ubiquitination. E3 ubiquitin-protein ligase that mediates ubiquitination of ACC synthases (ACS). Negatively regulates ethylene biosynthesis probably via ubiquitin-dependent degradation of ACS4 and ACS7 enzymes. Regulates lateral root formation and development by controlling ethylene production which inhibits lateral root formation at high concentration. The protein is E3 ubiquitin-protein ligase XBAT32 (XBAT32) of Arabidopsis thaliana (Mouse-ear cress).